We begin with the raw amino-acid sequence, 1213 residues long: DNA-directed RNA polymerase subunit beta' (1213 aa).

4 residues coordinate Zn(2+): cysteine 60, cysteine 62, cysteine 75, and cysteine 78. Aspartate 450, aspartate 452, and aspartate 454 together coordinate Mg(2+). Positions 819, 893, 900, and 903 each coordinate Zn(2+).

Belongs to the RNA polymerase beta' chain family. In terms of assembly, the RNAP catalytic core consists of 2 alpha, 1 beta, 1 beta' and 1 omega subunit. When a sigma factor is associated with the core the holoenzyme is formed, which can initiate transcription. It depends on Mg(2+) as a cofactor. The cofactor is Zn(2+).

The catalysed reaction is RNA(n) + a ribonucleoside 5'-triphosphate = RNA(n+1) + diphosphate. Functionally, DNA-dependent RNA polymerase catalyzes the transcription of DNA into RNA using the four ribonucleoside triphosphates as substrates. This chain is DNA-directed RNA polymerase subunit beta', found in Streptococcus pyogenes serotype M28 (strain MGAS6180).